Here is a 362-residue protein sequence, read N- to C-terminus: Photosystem II protein D1 3 (362 aa).

Transmembrane regions (helical) follow at residues 29-46 (YVGW…SATI), 118-133 (HFLI…EWEL), and 142-156 (WICI…AATA). A chlorophyll a-binding site is contributed by His-118. Residue Tyr-126 coordinates pheophytin a. Positions 170 and 189 each coordinate [CaMn4O5] cluster. Residues 197–218 (FHMLGVAGVFGGALISAMHGSL) form a helical membrane-spanning segment. His-198 contributes to the chlorophyll a binding site. Residues His-215 and 264–265 (AF) contribute to the a quinone site. His-215 contacts Fe cation. Residue His-274 participates in Fe cation binding. A helical transmembrane segment spans residues 276–290 (IMAAFPVIGIWFTSL). His-334, Glu-335, Asp-344, and Ala-346 together coordinate [CaMn4O5] cluster. The propeptide occupies 347–362 (GTESAPVAVSTAKVGG).

Belongs to the reaction center PufL/M/PsbA/D family. In terms of assembly, PSII is composed of 1 copy each of membrane proteins PsbA, PsbB, PsbC, PsbD, PsbE, PsbF, PsbH, PsbI, PsbJ, PsbK, PsbL, PsbM, PsbT, PsbX, Psb30/Ycf12, peripheral proteins PsbO, CyanoQ (PsbQ), PsbU, PsbV and a large number of cofactors. It forms dimeric complexes. The D1/D2 heterodimer binds P680, chlorophylls that are the primary electron donor of PSII, and subsequent electron acceptors. It shares a non-heme iron and each subunit binds pheophytin, quinone, additional chlorophylls, carotenoids and lipids. D1 provides most of the ligands for the Mn4-Ca-O5 cluster of the oxygen-evolving complex (OEC). There is also a Cl(-1) ion associated with D1 and D2, which is required for oxygen evolution. The PSII complex binds additional chlorophylls, carotenoids and specific lipids. is required as a cofactor. In terms of processing, tyr-161 forms a radical intermediate that is referred to as redox-active TyrZ, YZ or Y-Z. C-terminally processed by CtpA; processing is essential to allow assembly of the oxygen-evolving complex and thus photosynthetic growth.

Its subcellular location is the cell inner membrane. It carries out the reaction 2 a plastoquinone + 4 hnu + 2 H2O = 2 a plastoquinol + O2. Photosystem II (PSII) is a light-driven water:plastoquinone oxidoreductase that uses light energy to abstract electrons from H(2)O, generating O(2) and a proton gradient subsequently used for ATP formation. It consists of a core antenna complex that captures photons, and an electron transfer chain that converts photonic excitation into a charge separation. The D1/D2 (PsbA/PsbD) reaction center heterodimer binds P680, the primary electron donor of PSII as well as several subsequent electron acceptors. This chain is Photosystem II protein D1 3, found in Gloeobacter violaceus (strain ATCC 29082 / PCC 7421).